Consider the following 584-residue polypeptide: Aspartate--tRNA(Asp/Asn) ligase (584 aa).

Glu-177 is a binding site for L-aspartate. The segment at 201-204 (QLFK) is aspartate. Residue Arg-223 participates in L-aspartate binding. ATP contacts are provided by residues 223–225 (RDE) and Gln-232. His-447 contributes to the L-aspartate binding site. Position 481 (Glu-481) interacts with ATP. Arg-488 provides a ligand contact to L-aspartate. 533–536 (GLDR) provides a ligand contact to ATP.

The protein belongs to the class-II aminoacyl-tRNA synthetase family. Type 1 subfamily. As to quaternary structure, homodimer.

Its subcellular location is the cytoplasm. It carries out the reaction tRNA(Asx) + L-aspartate + ATP = L-aspartyl-tRNA(Asx) + AMP + diphosphate. Its function is as follows. Aspartyl-tRNA synthetase with relaxed tRNA specificity since it is able to aspartylate not only its cognate tRNA(Asp) but also tRNA(Asn). Reaction proceeds in two steps: L-aspartate is first activated by ATP to form Asp-AMP and then transferred to the acceptor end of tRNA(Asp/Asn). The protein is Aspartate--tRNA(Asp/Asn) ligase of Chlamydia abortus (strain DSM 27085 / S26/3) (Chlamydophila abortus).